The chain runs to 477 residues: Ribulose bisphosphate carboxylase large chain (477 aa).

Residues 1–2 (MS) constitute a propeptide that is removed on maturation. At Pro-3 the chain carries N-acetylproline. Lys-14 is modified (N6,N6,N6-trimethyllysine). Positions 123 and 173 each coordinate substrate. Catalysis depends on Lys-175, which acts as the Proton acceptor. Lys-177 contributes to the substrate binding site. Lys-201, Asp-203, and Glu-204 together coordinate Mg(2+). Lys-201 carries the N6-carboxylysine modification. The Proton acceptor role is filled by His-294. Substrate-binding residues include Arg-295, His-327, and Ser-379.

The protein belongs to the RuBisCO large chain family. Type I subfamily. In terms of assembly, heterohexadecamer of 8 large chains and 8 small chains; disulfide-linked. The disulfide link is formed within the large subunit homodimers. The cofactor is Mg(2+). In terms of processing, the disulfide bond which can form in the large chain dimeric partners within the hexadecamer appears to be associated with oxidative stress and protein turnover.

The protein resides in the plastid. It localises to the chloroplast. It catalyses the reaction 2 (2R)-3-phosphoglycerate + 2 H(+) = D-ribulose 1,5-bisphosphate + CO2 + H2O. It carries out the reaction D-ribulose 1,5-bisphosphate + O2 = 2-phosphoglycolate + (2R)-3-phosphoglycerate + 2 H(+). Functionally, ruBisCO catalyzes two reactions: the carboxylation of D-ribulose 1,5-bisphosphate, the primary event in carbon dioxide fixation, as well as the oxidative fragmentation of the pentose substrate in the photorespiration process. Both reactions occur simultaneously and in competition at the same active site. This is Ribulose bisphosphate carboxylase large chain from Dioscorea elephantipes (Elephant's foot yam).